Consider the following 105-residue polypeptide: Large ribosomal subunit protein uL24 (105 aa).

This sequence belongs to the universal ribosomal protein uL24 family. As to quaternary structure, part of the 50S ribosomal subunit.

Its function is as follows. One of two assembly initiator proteins, it binds directly to the 5'-end of the 23S rRNA, where it nucleates assembly of the 50S subunit. One of the proteins that surrounds the polypeptide exit tunnel on the outside of the subunit. The protein is Large ribosomal subunit protein uL24 of Aromatoleum aromaticum (strain DSM 19018 / LMG 30748 / EbN1) (Azoarcus sp. (strain EbN1)).